The following is a 201-amino-acid chain: Peroxiredoxin-2F, mitochondrial (201 aa).

Residues 1-30 constitute a mitochondrion transit peptide; sequence MAMSILKLRNLSALRSAANSARIGVSSRGF. A Phosphothreonine modification is found at Thr-37. The region spanning 37-201 is the Thioredoxin domain; it reads TDITSAAPGV…TGAEVILGQI (165 aa). Residue Cys-89 is the Cysteine sulfenic acid (-SOH) intermediate of the active site. Residue Ser-149 is modified to Phosphoserine.

The protein belongs to the peroxiredoxin family. Prx5 subfamily. As to quaternary structure, monomer. As to expression, expressed in the whole plant.

It is found in the mitochondrion matrix. It carries out the reaction [glutaredoxin]-dithiol + a hydroperoxide = [glutaredoxin]-disulfide + an alcohol + H2O. In terms of biological role, thiol-specific peroxidase that catalyzes the reduction of hydrogen peroxide and organic hydroperoxides to water and alcohols, respectively. Plays a role in cell protection against oxidative stress by detoxifying peroxides. Reduces preferentially hydrogen peroxide rather than alkyl peroxides. May be involved in mitochondrial redox homeostasis. The sequence is that of Peroxiredoxin-2F, mitochondrial (PRXIIF) from Arabidopsis thaliana (Mouse-ear cress).